A 98-amino-acid polypeptide reads, in one-letter code: NADH-ubiquinone oxidoreductase chain 4L (98 aa).

3 consecutive transmembrane segments (helical) span residues 1–21, 29–49, and 61–81; these read MSLT…GLLM, SLLC…MTIL, and IILL…LVMV.

The protein belongs to the complex I subunit 4L family. Core subunit of respiratory chain NADH dehydrogenase (Complex I) which is composed of 45 different subunits.

It is found in the mitochondrion inner membrane. The catalysed reaction is a ubiquinone + NADH + 5 H(+)(in) = a ubiquinol + NAD(+) + 4 H(+)(out). Core subunit of the mitochondrial membrane respiratory chain NADH dehydrogenase (Complex I) which catalyzes electron transfer from NADH through the respiratory chain, using ubiquinone as an electron acceptor. Part of the enzyme membrane arm which is embedded in the lipid bilayer and involved in proton translocation. The polypeptide is NADH-ubiquinone oxidoreductase chain 4L (MT-ND4L) (Vampyressa brocki (Brock's yellow-eared bat)).